The chain runs to 576 residues: Sodium/hydrogen exchanger 8 (576 aa).

Transmembrane regions (helical) follow at residues 55 to 75, 79 to 99, 118 to 138, 151 to 171, 186 to 206, 256 to 276, 306 to 326, 349 to 369, 374 to 394, 412 to 432, and 446 to 466; these read MTIF…HLLI, LHFL…GAVI, PNMF…YSLH, LFAV…IYFL, FAFG…IFNA, LGYF…TGLI, GLAE…GIVM, VAFL…FSFP, ISFV…NIFP, MFIM…SLHL, and TTIV…MPLI. Phosphothreonine is present on Thr-505. Phosphoserine occurs at positions 566 and 568.

It belongs to the monovalent cation:proton antiporter 1 (CPA1) transporter (TC 2.A.36) family. In terms of tissue distribution, predominantly expressed in the liver, skeletal muscle, kidney, and testis. Expressed in both renal cortex and medulla. Detected throughout the entire gastrointestinal tract, with high expression detected in stomach, duodenum and ascending colon. In gastric epithelium; expressed in the glands within the fundus and pylorus regions.

Its subcellular location is the golgi apparatus membrane. The protein localises to the golgi apparatus. The protein resides in the trans-Golgi network membrane. It is found in the endosome. It localises to the multivesicular body membrane. Its subcellular location is the apical cell membrane. The protein localises to the cytoplasmic vesicle. The protein resides in the secretory vesicle. It is found in the acrosome. It carries out the reaction Na(+)(in) + H(+)(out) = Na(+)(out) + H(+)(in). Its function is as follows. Na(+)/H(+) antiporter. Mediates the electoneutral exchange of intracellular H(+) ions for extracellular Na(+) in 1:1 stoichiometry. Acts as an Na(+)/H(+) exchanger in the trans-Golgi. Contributes to the regulation of pH regulation of Golgi apparatus, and consequently, in protein trafficking and endosomal morphology. Plays a crucial role in germ cells in acrosome biogenesis and sperm development, probably by playing a role in the fusion of the Golgi-derived vesicles that form the acrosomal cap. Can also be active at the cell surface of specialized cells. In the small intestine, plays a major physiological role in transepithelial absorption of Na(+). Regulates intracellular pH homeostasis of intestinal epithelial cells. Acts as an important regulator of mucosal integrity in the intestine and in the stomach, could mediate the pH fluctuation necessary for mucin exocytosis or assist membrane trafficking of other proteins. Plays a role in photoreceptor survival and in the maintenance of intracellular pH homeostasis in retinal pigment epithelium (RPE cells). The polypeptide is Sodium/hydrogen exchanger 8 (Slc9a8) (Mus musculus (Mouse)).